The sequence spans 498 residues: ATP synthase subunit beta, chloroplastic (498 aa).

T6 carries the phosphothreonine modification. Position 13 is a phosphoserine (S13). An ATP-binding site is contributed by G172–T179.

The protein belongs to the ATPase alpha/beta chains family. As to quaternary structure, F-type ATPases have 2 components, CF(1) - the catalytic core - and CF(0) - the membrane proton channel. CF(1) has five subunits: alpha(3), beta(3), gamma(1), delta(1), epsilon(1). CF(0) has four main subunits: a(1), b(1), b'(1) and c(9-12).

It is found in the plastid. The protein localises to the chloroplast thylakoid membrane. The catalysed reaction is ATP + H2O + 4 H(+)(in) = ADP + phosphate + 5 H(+)(out). Functionally, produces ATP from ADP in the presence of a proton gradient across the membrane. The catalytic sites are hosted primarily by the beta subunits. The sequence is that of ATP synthase subunit beta, chloroplastic from Raphanus sativus (Radish).